A 189-amino-acid chain; its full sequence is Phosphoheptose isomerase (189 aa).

Residues 34-189 (LVDALGNGKK…CDLLEKRLFG (156 aa)) form the SIS domain. 49 to 51 (NGG) provides a ligand contact to substrate. The Zn(2+) site is built by H58 and E62. Substrate is bound by residues E62, 91 to 92 (ND), 117 to 119 (STS), S122, and Q169. Residues Q169 and H177 each contribute to the Zn(2+) site.

This sequence belongs to the SIS family. GmhA subfamily. As to quaternary structure, homotetramer. It depends on Zn(2+) as a cofactor.

The protein resides in the cytoplasm. The catalysed reaction is 2 D-sedoheptulose 7-phosphate = D-glycero-alpha-D-manno-heptose 7-phosphate + D-glycero-beta-D-manno-heptose 7-phosphate. Its pathway is carbohydrate biosynthesis; D-glycero-D-manno-heptose 7-phosphate biosynthesis; D-glycero-alpha-D-manno-heptose 7-phosphate and D-glycero-beta-D-manno-heptose 7-phosphate from sedoheptulose 7-phosphate: step 1/1. Its function is as follows. Catalyzes the isomerization of sedoheptulose 7-phosphate in D-glycero-D-manno-heptose 7-phosphate. The sequence is that of Phosphoheptose isomerase from Geotalea uraniireducens (strain Rf4) (Geobacter uraniireducens).